Consider the following 203-residue polypeptide: A-type ATP synthase subunit E (203 aa).

Belongs to the V-ATPase E subunit family. As to quaternary structure, has multiple subunits with at least A(3), B(3), C, D, E, F, H, I and proteolipid K(x).

It is found in the cell membrane. Its function is as follows. Component of the A-type ATP synthase that produces ATP from ADP in the presence of a proton gradient across the membrane. This is A-type ATP synthase subunit E from Methanococcus aeolicus (strain ATCC BAA-1280 / DSM 17508 / OCM 812 / Nankai-3).